Reading from the N-terminus, the 381-residue chain is MSLNMFWFLPTHGDGHYLGTEEGSRPVDHGYLQQIAQAADRLGYTGVLIPTGRSCEDAWLVAASMIPVTQRLKFLVALRPSVTSPTVAARQAATLDRLSNGRALFNLVTGSDPQELAGDGVFLDHSERYEASAEFTQVWRRLLLGETVNFNGKHIHVRGAKLLFPPIQQPYPPLYFGGSSDVAQELAAEQVDLYLTWGEPPELVKEKIEQVRAKAAAHGRKIRFGIRLHVIVRETNDEAWQAAERLISHLDDETIAKAQAAFARTDSVGQQRMAALHNGKRDNLEISPNLWAGVGLVRGGAGTALVGDGPTVAARINEYAALGIDSFVLSGYPHLEEAYRVGELLFPHLDVAIPEIPQPQPLNPQGEAVANDFIPRNVAQS.

It belongs to the SsuD family. Homotetramer.

The enzyme catalyses an alkanesulfonate + FMNH2 + O2 = an aldehyde + FMN + sulfite + H2O + 2 H(+). Its function is as follows. Catalyzes the desulfonation of aliphatic sulfonates. This chain is Alkanesulfonate monooxygenase, found in Escherichia coli O6:K15:H31 (strain 536 / UPEC).